The primary structure comprises 117 residues: Neurotoxic enhancer CSTX-13 (117 aa).

The signal sequence occupies residues methionine 1–alanine 20. The propeptide occupies glutamate 21–arginine 47. 4 disulfide bridges follow: cysteine 50/cysteine 65, cysteine 57/cysteine 74, cysteine 64/cysteine 95, and cysteine 76/cysteine 93. Residues arginine 82–arginine 87 constitute a propeptide that is removed on maturation. Threonine 116 is modified (threonine amide).

Belongs to the neurotoxin 19 (CSTX) family. 12 subfamily. As to quaternary structure, heterodimer of A and B chains; disulfide-linked. Interacts with CSTX-1 (AC P81694) (Kd=430 nM), and with CSTX-9 (AC P58604) (Kd=370 nM). As to expression, expressed by the venom gland.

The protein resides in the secreted. The protein localises to the target cell membrane. Synergistic toxin that induces or increases a cytolytic effect when combined with CSTX-1 (AC P81694) or CSTX-9 (AC P58604). When alone, has a weak insecticidal activity, with an unknown molecular target. This is Neurotoxic enhancer CSTX-13 from Cupiennius salei (American wandering spider).